The following is a 500-amino-acid chain: Cytochrome P450 CYP736A12 (500 aa).

A helical membrane pass occupies residues 4 to 24 (LAYPLLFVLLGALSWWILPII). Cysteine 442 lines the heme pocket.

Belongs to the cytochrome P450 family. It depends on heme as a cofactor.

The protein resides in the membrane. Its function is as follows. Probable heme-thiolate monooxygenase. The chain is Cytochrome P450 CYP736A12 from Panax ginseng (Korean ginseng).